We begin with the raw amino-acid sequence, 421 residues long: NADH-quinone oxidoreductase subunit F (421 aa).

Residues 1 to 25 form a disordered region; the sequence is MLKEEDKIFTNLHGQQSHDLKSSKK. The segment covering 16-25 has biased composition (basic and acidic residues); it reads QSHDLKSSKK. 54–63 is a binding site for NAD(+); it reads GRGGAGFSTG. 166-213 contributes to the FMN binding site; it reads GAGAYICGEETALLESLEGKKGMPRLKPPFPAGFGLYGCPTTINNVES. Positions 344, 347, 350, and 390 each coordinate [4Fe-4S] cluster.

This sequence belongs to the complex I 51 kDa subunit family. The cofactor is FMN. [4Fe-4S] cluster serves as cofactor.

It carries out the reaction a quinone + NADH + 5 H(+)(in) = a quinol + NAD(+) + 4 H(+)(out). In terms of biological role, NDH-1 shuttles electrons from NADH, via FMN and iron-sulfur (Fe-S) centers, to quinones in the respiratory chain. Couples the redox reaction to proton translocation (for every two electrons transferred, four hydrogen ions are translocated across the cytoplasmic membrane), and thus conserves the redox energy in a proton gradient. The protein is NADH-quinone oxidoreductase subunit F (nuoF) of Rickettsia massiliae (strain Mtu5).